The sequence spans 261 residues: Carnitinyl-CoA dehydratase (261 aa).

E111 serves as the catalytic Nucleophile. E131 acts as the Proton acceptor in catalysis.

Belongs to the enoyl-CoA hydratase/isomerase family.

The catalysed reaction is (R)-carnitinyl-CoA = crotonobetainyl-CoA + H2O. The protein operates within amine and polyamine metabolism; carnitine metabolism. In terms of biological role, catalyzes the reversible dehydration of L-carnitinyl-CoA to crotonobetainyl-CoA. The protein is Carnitinyl-CoA dehydratase of Escherichia coli O157:H7.